We begin with the raw amino-acid sequence, 643 residues long: MLEQIRRPADLQHLSQQQLRDLAAEIRELLVHKVAATGGHLGPNLGVVELTLALHRVFDSPHDPIIFDTGHQAYVHKMLTGRCQDFDSLRKKAGLSGYPSRAESEHDWVESSHASTALSYADGLAKAFELAGNRNRHVVAVVGDGALTGGMCWEALNNIAATPRPVVIVVNDNGRSYAPTIGGVADHLATLRLQPAYERLLEKGRDALHSLPLIGQIAYRFMHSVKAGIKDSLSPQLLFTDLGLKYVGPVDGHDEHAVEVALRKARGFGGPVIVHVVTRKGMGYPPAEADQAEQMHTCGVMDPTTGQPTKIAAPDWTAIFSDALIGYAMKRRDIVAITAAMPGPTGLTAFGQCFPDRLFDVGIAEQHAMTSAAGLAMGRMHPVVAIYSTFLNRAFDQIMMDVALHKLPVTMVIDRAGITGSDGPSHNGMWDLSMLGIVPGMRVAAPRDAIRLREELGEALDVDDGPTAIRFPKGDVCEDIPALKRRSGVDVLAVPATGLAQDVLLVGVGVFASMALAVAKRLHNQGIGVTVIDPRWVLPVCDGVLELAHTHKLIVTLEDNGVNGGVGAAVSTALRQVEIDTPCRDVGLPQEFYDHASRSEVLADLGLTDQDVARRITGWVVAFGHCGSGDDAGQYGPRSSQTM.

Residues His-71 and 112-114 (SHA) contribute to the thiamine diphosphate site. Asp-144 lines the Mg(2+) pocket. Thiamine diphosphate is bound by residues 145–146 (GA), Asn-173, Tyr-284, and Glu-365. Asn-173 is a binding site for Mg(2+).

The protein belongs to the transketolase family. DXPS subfamily. As to quaternary structure, homodimer. It depends on Mg(2+) as a cofactor. Thiamine diphosphate serves as cofactor.

It carries out the reaction D-glyceraldehyde 3-phosphate + pyruvate + H(+) = 1-deoxy-D-xylulose 5-phosphate + CO2. Its pathway is metabolic intermediate biosynthesis; 1-deoxy-D-xylulose 5-phosphate biosynthesis; 1-deoxy-D-xylulose 5-phosphate from D-glyceraldehyde 3-phosphate and pyruvate: step 1/1. Catalyzes the acyloin condensation reaction between C atoms 2 and 3 of pyruvate and glyceraldehyde 3-phosphate to yield 1-deoxy-D-xylulose-5-phosphate (DXP). This is 1-deoxy-D-xylulose-5-phosphate synthase from Mycobacterium leprae (strain Br4923).